The sequence spans 162 residues: Corticoliberin-2 (162 aa).

The N-terminal stretch at methionine 1–alanine 24 is a signal peptide. Positions isoleucine 25–arginine 119 are excised as a propeptide. The disordered stretch occupies residues leucine 57–serine 79. At phenylalanine 160 the chain carries Phenylalanine amide.

The protein belongs to the sauvagine/corticotropin-releasing factor/urotensin I family.

The protein resides in the secreted. In terms of biological role, this hormone from hypothalamus regulates the release of corticotropin from pituitary gland. The sequence is that of Corticoliberin-2 (crf2) from Catostomus commersonii (White sucker).